The chain runs to 470 residues: Na(+)-translocating NADH-quinone reductase subunit A (470 aa).

Belongs to the NqrA family. As to quaternary structure, composed of six subunits; NqrA, NqrB, NqrC, NqrD, NqrE and NqrF.

It carries out the reaction a ubiquinone + n Na(+)(in) + NADH + H(+) = a ubiquinol + n Na(+)(out) + NAD(+). Its function is as follows. NQR complex catalyzes the reduction of ubiquinone-1 to ubiquinol by two successive reactions, coupled with the transport of Na(+) ions from the cytoplasm to the periplasm. NqrA to NqrE are probably involved in the second step, the conversion of ubisemiquinone to ubiquinol. The sequence is that of Na(+)-translocating NADH-quinone reductase subunit A from Chlamydia caviae (strain ATCC VR-813 / DSM 19441 / 03DC25 / GPIC) (Chlamydophila caviae).